Consider the following 216-residue polypeptide: UPF0502 protein Smal_0052 (216 aa).

It belongs to the UPF0502 family.

In Stenotrophomonas maltophilia (strain R551-3), this protein is UPF0502 protein Smal_0052.